The following is a 443-amino-acid chain: MAKYFGTDGIRGEVANSTITVEFTQKLGNAVGSLINQKNYPKFVIVGQDTRSSGGFLKFALVSGLNAAGIDVLDLGVVPTPVVAFMTVKHRAAAGFVITASHNKFTDNGIKLFSSNGFKLDDALEEEVEDMIDGDFIYQPQFKFGSYKILANAIDEYIESIHSRFAKFVNYKGKVVVDCAHGAASHNFEALLDKFGINYVSIASNPDGLNINVGCGATCVSNIKKAVKEQKADLGISLDGDADRIIIVDENGQEIDGDGILNILAQYSDICGGTNGIVGTQMTNMSYENHYRANKIPFIRSKVGDRYVLEDLVKYGYKIGGESSGHVINLNFGTTGDGLFTAIQLLAIFSQAYKPVSEFKLQGELMQQTLINVPLTKKVAREDLQKVASDVNDVEKRLGNRGRVLLRPSGTEPVLRVMVEADDKSLATNEAEYLVEKVKQKLV.

Residue S101 is the Phosphoserine intermediate of the active site. 4 residues coordinate Mg(2+): S101, D239, D241, and D243. Position 101 is a phosphoserine (S101).

This sequence belongs to the phosphohexose mutase family. Mg(2+) serves as cofactor. Post-translationally, activated by phosphorylation.

The enzyme catalyses alpha-D-glucosamine 1-phosphate = D-glucosamine 6-phosphate. Catalyzes the conversion of glucosamine-6-phosphate to glucosamine-1-phosphate. The protein is Phosphoglucosamine mutase of Francisella tularensis subsp. holarctica (strain FTNF002-00 / FTA).